We begin with the raw amino-acid sequence, 223 residues long: N-acetylmuramic acid 6-phosphate phosphatase (223 aa).

Asp-9 serves as the catalytic Nucleophile. Residues Asp-9, Asp-11, and Asp-168 each coordinate Mg(2+). The active-site Proton donor is Asp-11.

This sequence belongs to the HAD-like hydrolase superfamily. CbbY/CbbZ/Gph/YieH family. Phosphatase MupP subfamily. Requires Mg(2+) as cofactor.

It catalyses the reaction N-acetyl-D-muramate 6-phosphate + H2O = N-acetyl-D-muramate + phosphate. The protein operates within cell wall biogenesis; peptidoglycan recycling. Functionally, specifically catalyzes the dephosphorylation of N-acetylmuramate 6-phosphate (MurNAc-6P) to MurNac. Is involved in peptidoglycan recycling as part of a cell wall recycling pathway that bypasses de novo biosynthesis of the peptidoglycan precursor UDP-MurNAc. Plays a role in intrinsic resistance to fosfomycin, which targets the de novo synthesis of UDP-MurNAc. Shows a very low activity on GlcNAc-6P, and neither alpha-1-phosphorylated MurNAc, GlcNAc, or glucose nor glucosamine-6P or glucose-6P can be used as a substrate. The sequence is that of N-acetylmuramic acid 6-phosphate phosphatase from Pseudomonas putida (strain ATCC 47054 / DSM 6125 / CFBP 8728 / NCIMB 11950 / KT2440).